Consider the following 425-residue polypeptide: RNA polymerase sigma factor SigA (425 aa).

The interval methionine 193 to threonine 263 is sigma-70 factor domain-2. An Interaction with polymerase core subunit RpoC motif is present at residues aspartate 217–glutamine 220. The interval glutamate 272–glutamate 347 is sigma-70 factor domain-3. Residues valine 360–histidine 413 form a sigma-70 factor domain-4 region. Positions leucine 386–alanine 405 form a DNA-binding region, H-T-H motif.

This sequence belongs to the sigma-70 factor family. RpoD/SigA subfamily. Interacts transiently with the RNA polymerase catalytic core.

Its subcellular location is the cytoplasm. Its function is as follows. Sigma factors are initiation factors that promote the attachment of RNA polymerase to specific initiation sites and are then released. This sigma factor is the primary sigma factor during exponential growth. This is RNA polymerase sigma factor SigA from Synechocystis sp. (strain ATCC 27184 / PCC 6803 / Kazusa).